A 313-amino-acid polypeptide reads, in one-letter code: Ketimine reductase mu-crystallin (313 aa).

R47 lines the 3,3',5-triiodo-L-thyronine pocket. The NADPH site is built by S90, H91, R118, A143, V145, Q146, N167, R168, T169, N172, T204, M205, and V225. 3,3',5-triiodo-L-thyronine is bound at residue E256. S291 is a binding site for NADPH.

This sequence belongs to the ornithine cyclodeaminase/mu-crystallin family. As to quaternary structure, homodimer. Binds the thyroid hormone triiodothyronine (T3); T3 binding inhibits enzymatic activity. Expressed in the spiral ligament of the cochlea (at protein level).

The protein resides in the cytoplasm. It carries out the reaction L-pipecolate + NADP(+) = Delta(1)-piperideine-2-carboxylate + NADPH + H(+). The catalysed reaction is L-pipecolate + NAD(+) = Delta(1)-piperideine-2-carboxylate + NADH + H(+). The enzyme catalyses L-proline + NADP(+) = 1-pyrroline-2-carboxylate + NADPH + H(+). It catalyses the reaction L-proline + NAD(+) = 1-pyrroline-2-carboxylate + NADH + H(+). It carries out the reaction (3R)-1,4-thiomorpholine-3-carboxylate + NAD(+) = 3,4-dehydrothiomorpholine-3-carboxylate + NADH + 2 H(+). The catalysed reaction is (3R)-1,4-thiomorpholine-3-carboxylate + NADP(+) = 3,4-dehydrothiomorpholine-3-carboxylate + NADPH + 2 H(+). The enzyme catalyses (S)-cystathionine ketimine + NADH + 2 H(+) = (3R,5S)-2,3,5,6,7-pentahydro-1,4-thiazepine-3,5-dicarboxylate + NAD(+). It catalyses the reaction (S)-cystathionine ketimine + NADPH + 2 H(+) = (3R,5S)-2,3,5,6,7-pentahydro-1,4-thiazepine-3,5-dicarboxylate + NADP(+). It carries out the reaction (R)-lanthionine ketimine + NADPH + 2 H(+) = (3R,5R)-1,4-thiomorpholine-3,5-dicarboxylate + NADP(+). The catalysed reaction is Delta(2)-thiazoline-2-carboxylate + NADPH + 2 H(+) = L-thiazolidine-2-carboxylate + NADP(+). Catalyzes the NAD(P)H-dependent reduction of imine double bonds of a number of cyclic ketimine substrates, including sulfur-containing cyclic ketimines. Under physiological conditions, it efficiently catalyzes delta(1)-piperideine-2-carboxylate (P2C) and delta(1)-pyrroline-2-carboxylate (Pyr2C) reduction, suggesting a central role in lysine and glutamate metabolism. Additional substrates are delta(2)-thiazoline-2-carboxylate (T2C), 3,4-dehydrothiomorpholine-3-carboxylate (AECK), and (R)-lanthionine ketimine (LK) that is reduced at very low rate compared to other substrates. Also catalyzes the NAD(P)H-dependent reduction of (S)-cystathionine ketimine (CysK). In Mus musculus (Mouse), this protein is Ketimine reductase mu-crystallin.